The chain runs to 445 residues: Tubulin beta-1 chain (445 aa).

An MREI motif motif is present at residues 1–4 (MREI). GTP-binding residues include Q11, E69, S138, G142, T143, G144, N204, and N226. A Mg(2+)-binding site is contributed by E69. Positions 424–445 (QYQDATADEQGEFEEEGEEDEA) are disordered. A compositionally biased stretch (acidic residues) spans 429-445 (TADEQGEFEEEGEEDEA). At E438 the chain carries 5-glutamyl polyglutamate.

The protein belongs to the tubulin family. In terms of assembly, dimer of alpha and beta chains. A typical microtubule is a hollow water-filled tube with an outer diameter of 25 nm and an inner diameter of 15 nM. Alpha-beta heterodimers associate head-to-tail to form protofilaments running lengthwise along the microtubule wall with the beta-tubulin subunit facing the microtubule plus end conferring a structural polarity. Microtubules usually have 13 protofilaments but different protofilament numbers can be found in some organisms and specialized cells. Requires Mg(2+) as cofactor. Post-translationally, some glutamate residues at the C-terminus are polyglycylated, resulting in polyglycine chains on the gamma-carboxyl group. Glycylation is mainly limited to tubulin incorporated into axonemes (cilia and flagella) whereas glutamylation is prevalent in neuronal cells, centrioles, axonemes, and the mitotic spindle. Both modifications can coexist on the same protein on adjacent residues, and lowering polyglycylation levels increases polyglutamylation, and reciprocally. The precise function of polyglycylation is still unclear. Some glutamate residues at the C-terminus are polyglutamylated, resulting in polyglutamate chains on the gamma-carboxyl group. Polyglutamylation plays a key role in microtubule severing by spastin (SPAST). SPAST preferentially recognizes and acts on microtubules decorated with short polyglutamate tails: severing activity by SPAST increases as the number of glutamates per tubulin rises from one to eight, but decreases beyond this glutamylation threshold. In terms of tissue distribution, highly expressed in skeletal muscle.

The protein localises to the cytoplasm. It localises to the cytoskeleton. In terms of biological role, tubulin is the major constituent of microtubules, a cylinder consisting of laterally associated linear protofilaments composed of alpha- and beta-tubulin heterodimers. Microtubules grow by the addition of GTP-tubulin dimers to the microtubule end, where a stabilizing cap forms. Below the cap, tubulin dimers are in GDP-bound state, owing to GTPase activity of alpha-tubulin. This is Tubulin beta-1 chain from Gallus gallus (Chicken).